The sequence spans 164 residues: 2-C-methyl-D-erythritol 2,4-cyclodiphosphate synthase (164 aa).

A divalent metal cation is bound by residues D9 and H11. 4-CDP-2-C-methyl-D-erythritol 2-phosphate-binding positions include 9-11 and 36-37; these read DAH and HS. H44 contacts a divalent metal cation. 4-CDP-2-C-methyl-D-erythritol 2-phosphate contacts are provided by residues 58–60, 63–67, 134–137, F141, and R144; these read DLG, FPDSD, and TTTE.

The protein belongs to the IspF family. In terms of assembly, homotrimer. A divalent metal cation is required as a cofactor.

The enzyme catalyses 4-CDP-2-C-methyl-D-erythritol 2-phosphate = 2-C-methyl-D-erythritol 2,4-cyclic diphosphate + CMP. Its pathway is isoprenoid biosynthesis; isopentenyl diphosphate biosynthesis via DXP pathway; isopentenyl diphosphate from 1-deoxy-D-xylulose 5-phosphate: step 4/6. Functionally, involved in the biosynthesis of isopentenyl diphosphate (IPP) and dimethylallyl diphosphate (DMAPP), two major building blocks of isoprenoid compounds. Catalyzes the conversion of 4-diphosphocytidyl-2-C-methyl-D-erythritol 2-phosphate (CDP-ME2P) to 2-C-methyl-D-erythritol 2,4-cyclodiphosphate (ME-CPP) with a corresponding release of cytidine 5-monophosphate (CMP). This is 2-C-methyl-D-erythritol 2,4-cyclodiphosphate synthase from Alkalilimnicola ehrlichii (strain ATCC BAA-1101 / DSM 17681 / MLHE-1).